The chain runs to 605 residues: Aspartate--tRNA(Asp/Asn) ligase (605 aa).

E176 provides a ligand contact to L-aspartate. An aspartate region spans residues 200-203 (QQFK). Residues R222 and H452 each contribute to the L-aspartate site. 222–224 (RDE) contributes to the ATP binding site. E490 contributes to the ATP binding site. L-aspartate is bound at residue R497. Residue 542 to 545 (GIDR) participates in ATP binding.

This sequence belongs to the class-II aminoacyl-tRNA synthetase family. Type 1 subfamily. As to quaternary structure, homodimer.

The protein localises to the cytoplasm. The catalysed reaction is tRNA(Asx) + L-aspartate + ATP = L-aspartyl-tRNA(Asx) + AMP + diphosphate. Aspartyl-tRNA synthetase with relaxed tRNA specificity since it is able to aspartylate not only its cognate tRNA(Asp) but also tRNA(Asn). Reaction proceeds in two steps: L-aspartate is first activated by ATP to form Asp-AMP and then transferred to the acceptor end of tRNA(Asp/Asn). The chain is Aspartate--tRNA(Asp/Asn) ligase from Rickettsia prowazekii (strain Madrid E).